Consider the following 353-residue polypeptide: Abasic site processing protein HMCES (353 aa).

Cys-2 serves as the catalytic Nucleophile. A Thiazolidine linkage to a ring-opened DNA abasic site modification is found at Cys-2. The active site involves Glu-127. Residues Lys-148 and Lys-151 each participate in a glycyl lysine isopeptide (Lys-Gly) (interchain with G-Cter in SUMO2) cross-link. Phosphoserine is present on Ser-160. Residues Lys-274 and Lys-275 each participate in a glycyl lysine isopeptide (Lys-Gly) (interchain with G-Cter in SUMO2) cross-link. Residues 292-353 (TKSPKKEVPD…DEPVAKRPNS (62 aa)) are disordered. Ser-294 carries the post-translational modification Phosphoserine. The span at 295–307 (PKKEVPDSPKKDA) shows a compositional bias: basic and acidic residues. Lys-305 participates in a covalent cross-link: Glycyl lysine isopeptide (Lys-Gly) (interchain with G-Cter in SUMO2). Residue Ser-321 is modified to Phosphoserine. The short motif at 332 to 338 (SLLDRWL) is the PIP-box element. A compositionally biased stretch (basic and acidic residues) spans 336–353 (RWLKQEKEDEPVAKRPNS). Residues Lys-339 and Lys-342 each participate in a glycyl lysine isopeptide (Lys-Gly) (interchain with G-Cter in SUMO2) cross-link.

It belongs to the SOS response-associated peptidase family. As to quaternary structure, interacts (via PIP-box motif) with PCNA. In terms of processing, ubiquitinated; the covalent HMCES DNA-protein cross-link is ubiquitinated, leading to its degradation by the proteasome.

It is found in the chromosome. With respect to regulation, formation and reversal of DNA-protein cross-link depends on DNA context. Catalyzes formation of the thiazolidine linkage in presence of abasic sites in single-stranded DNA. Mediates the reversal of the thiazolidine cross-link in presence of double stranded DNA. Sensor of abasic sites in single-stranded DNA (ssDNA) required to preserve genome integrity by promoting error-free repair of abasic sites. Acts as an enzyme that recognizes and binds abasic sites in ssDNA at replication forks and chemically modifies the lesion by forming a covalent cross-link with DNA: forms a stable thiazolidine linkage between a ring-opened abasic site and the alpha-amino and sulfhydryl substituents of its N-terminal catalytic cysteine residue. Promotes error-free repair by protecting abasic sites from translesion synthesis (TLS) polymerases and endonucleases that are error-prone and would generate mutations and double-strand breaks. The HMCES DNA-protein cross-link is then either reversed or degraded. HMCES is able to catalyze the reversal of its thiazolidine cross-link and cycle between a cross-link and a non-cross-linked state depending on DNA context: mediates self-reversal of the thiazolidine cross-link in double stranded DNA, allowing APEX1 to initiate downstream repair of abasic sites. The HMCES DNA-protein cross-link can also be degraded by the SPRTN metalloprotease following unfolding by the BRIP1/FANCJ helicase. Has preference for ssDNA, but can also accommodate double-stranded DNA with 3' or 5' overhang (dsDNA), and dsDNA-ssDNA 3' junction. Plays a protective role during somatic hypermutation of immunoglobulin genes in B-cells: acts via its ability to form covalent cross-links with abasic sites, thereby limiting the accumulation of deletions in somatic hypermutation target regions. Also involved in class switch recombination (CSR) in B-cells independently of the formation of a DNA-protein cross-link: acts by binding and protecting ssDNA overhangs to promote DNA double-strand break repair through the microhomology-mediated alternative-end-joining (Alt-EJ) pathway. Acts as a protease: mediates autocatalytic processing of its N-terminal methionine in order to expose the catalytic cysteine. This Rattus norvegicus (Rat) protein is Abasic site processing protein HMCES.